The chain runs to 370 residues: MKFELDKQDGRARRGRLIFKRGVVETPAFMPVGTYGSVKGMMPEEVADTGAQIILGNTFHLSIRPGTDIIEQHGDLHDFMNWKGPILTDSGGFQVFSLGKMRKITEEGVHFRNPVNGSKIFMGPEESMDVQRKLGSDIVMIFDECTPYPATHDVAADSMRLSLRWAERSKQAHGDNPSALFGIVQGGMYEDLRQESIKGLTDIGFDGYAIGGLSVGEPKEEMMGTLDFTEPHMPKDKPRYMMGVGKPEDIVEAVRRGIDMFDCVIPTRNARNGFLFTHSGVVKIRNAVNKTSLEPLDAKCDCYTCQNYTRAYLHHLDKCGEIQGARLNTIHNLHYYQLLMKGLREAIASETLDTFVSEFYQARGEDVPAL.

Asp89 acts as the Proton acceptor in catalysis. Residues 89-93, Asp143, Gln185, and Gly212 each bind substrate; that span reads DSGGF. Residues 243-249 are RNA binding; that stretch reads GVGKPED. Catalysis depends on Asp262, which acts as the Nucleophile. The tract at residues 267 to 271 is RNA binding; important for wobble base 34 recognition; the sequence is TRNAR. Zn(2+)-binding residues include Cys300, Cys302, Cys305, and His331.

This sequence belongs to the queuine tRNA-ribosyltransferase family. In terms of assembly, homodimer. Within each dimer, one monomer is responsible for RNA recognition and catalysis, while the other monomer binds to the replacement base PreQ1. It depends on Zn(2+) as a cofactor.

It catalyses the reaction 7-aminomethyl-7-carbaguanine + guanosine(34) in tRNA = 7-aminomethyl-7-carbaguanosine(34) in tRNA + guanine. Its pathway is tRNA modification; tRNA-queuosine biosynthesis. In terms of biological role, catalyzes the base-exchange of a guanine (G) residue with the queuine precursor 7-aminomethyl-7-deazaguanine (PreQ1) at position 34 (anticodon wobble position) in tRNAs with GU(N) anticodons (tRNA-Asp, -Asn, -His and -Tyr). Catalysis occurs through a double-displacement mechanism. The nucleophile active site attacks the C1' of nucleotide 34 to detach the guanine base from the RNA, forming a covalent enzyme-RNA intermediate. The proton acceptor active site deprotonates the incoming PreQ1, allowing a nucleophilic attack on the C1' of the ribose to form the product. After dissociation, two additional enzymatic reactions on the tRNA convert PreQ1 to queuine (Q), resulting in the hypermodified nucleoside queuosine (7-(((4,5-cis-dihydroxy-2-cyclopenten-1-yl)amino)methyl)-7-deazaguanosine). In Hydrogenovibrio crunogenus (strain DSM 25203 / XCL-2) (Thiomicrospira crunogena), this protein is Queuine tRNA-ribosyltransferase.